The chain runs to 455 residues: Probable glycine dehydrogenase (decarboxylating) subunit 1 (455 aa).

This sequence belongs to the GcvP family. N-terminal subunit subfamily. As to quaternary structure, the glycine cleavage system is composed of four proteins: P, T, L and H. In this organism, the P 'protein' is a heterodimer of two subunits.

The catalysed reaction is N(6)-[(R)-lipoyl]-L-lysyl-[glycine-cleavage complex H protein] + glycine + H(+) = N(6)-[(R)-S(8)-aminomethyldihydrolipoyl]-L-lysyl-[glycine-cleavage complex H protein] + CO2. Functionally, the glycine cleavage system catalyzes the degradation of glycine. The P protein binds the alpha-amino group of glycine through its pyridoxal phosphate cofactor; CO(2) is released and the remaining methylamine moiety is then transferred to the lipoamide cofactor of the H protein. The protein is Probable glycine dehydrogenase (decarboxylating) subunit 1 of Saccharolobus islandicus (strain Y.G.57.14 / Yellowstone #1) (Sulfolobus islandicus).